A 447-amino-acid chain; its full sequence is tRNA-2-methylthio-N(6)-dimethylallyladenosine synthase (447 aa).

Residues 3 to 120 (KKLYIKTNGC…LPALLNERLE (118 aa)) enclose the MTTase N-terminal domain. Residues Cys-12, Cys-49, Cys-83, Cys-157, Cys-161, and Cys-164 each contribute to the [4Fe-4S] cluster site. Positions 143–375 (RAEGPTAFVS…QNRLLMNAAR (233 aa)) constitute a Radical SAM core domain. One can recognise a TRAM domain in the interval 378 to 441 (ESMIGSKQKI…PNSLRGRLLE (64 aa)).

This sequence belongs to the methylthiotransferase family. MiaB subfamily. In terms of assembly, monomer. The cofactor is [4Fe-4S] cluster.

The protein localises to the cytoplasm. The catalysed reaction is N(6)-dimethylallyladenosine(37) in tRNA + (sulfur carrier)-SH + AH2 + 2 S-adenosyl-L-methionine = 2-methylsulfanyl-N(6)-dimethylallyladenosine(37) in tRNA + (sulfur carrier)-H + 5'-deoxyadenosine + L-methionine + A + S-adenosyl-L-homocysteine + 2 H(+). Catalyzes the methylthiolation of N6-(dimethylallyl)adenosine (i(6)A), leading to the formation of 2-methylthio-N6-(dimethylallyl)adenosine (ms(2)i(6)A) at position 37 in tRNAs that read codons beginning with uridine. The protein is tRNA-2-methylthio-N(6)-dimethylallyladenosine synthase of Legionella pneumophila (strain Paris).